A 298-amino-acid polypeptide reads, in one-letter code: Tyrosine recombinase XerC (298 aa).

A Core-binding (CB) domain is found at 2–88 (TDLHTDVERY…ALRSFFDWLV (87 aa)). The Tyr recombinase domain maps to 109–288 (HLPKNIDVDD…DFQHLASVYD (180 aa)). Catalysis depends on residues arginine 148, lysine 172, histidine 240, arginine 243, and histidine 266. The O-(3'-phospho-DNA)-tyrosine intermediate role is filled by tyrosine 275.

It belongs to the 'phage' integrase family. XerC subfamily. As to quaternary structure, forms a cyclic heterotetrameric complex composed of two molecules of XerC and two molecules of XerD, in which XerC interacts with XerD via its C-terminal region, XerD interacts with XerC via its C-terminal region and so on.

It is found in the cytoplasm. FtsK may regulate the catalytic switch between XerC and XerD in the heterotetrameric complex during the two steps of the recombination process. Its function is as follows. Site-specific tyrosine recombinase, which acts by catalyzing the cutting and rejoining of the recombining DNA molecules. Binds cooperatively to specific DNA consensus sequences that are separated from XerD binding sites by a short central region, forming the heterotetrameric XerC-XerD complex that recombines DNA substrates. The complex is essential to convert dimers of the bacterial chromosome into monomers to permit their segregation at cell division. It also contributes to the segregational stability of plasmids. In the complex XerC specifically exchanges the top DNA strands. This is Tyrosine recombinase XerC from Escherichia coli O157:H7.